A 784-amino-acid polypeptide reads, in one-letter code: Toll-like receptor 2 (784 aa).

A signal peptide spans 1–20 (MPRALWPAWVWAIIILSMEG). The Extracellular portion of the chain corresponds to 21 to 587 (ASDKASSLSC…ARLSLSECHR (567 aa)). A disulfide bridge links C30 with C36. 19 LRR repeats span residues 54-77 (VKSL…RCVN), 78-101 (LKTL…HLRN), 102-125 (LEYL…SLYV), 126-150 (LKFL…HLPD), 151-175 (LRTL…GLTF), 176-199 (LEEL…SIQN), 200-223 (ISHL…IVSS), 224-250 (LDCL…MSTS), 251-278 (VKKL…YVSG), 279-308 (IVEV…HLGN), 309-337 (VETL…LTGK), 338-361 (VKRV…HLKS), 362-388 (LEYL…AWPF), 389-414 (LQTL…TLKN), 415-437 (LNNL…WPGK), 438-457 (MKQL…CLPQ), 458-478 (TLEI…ILPQ), 479-500 (LKEL…FLPV), and 501-524 (LSVM…SFQQ). A glycan (N-linked (GlcNAc...) asparagine) is linked at N114. N-linked (GlcNAc...) asparagine glycosylation is present at N199. An intrachain disulfide couples C353 to C382. An intrachain disulfide couples C432 to C454. N442 carries an N-linked (GlcNAc...) asparagine glycan. Residues 525 to 579 (LKTLEAGGNNFICSCDFLSFTQGQQALGRVLVDWPDDYRCDSPSHVRGQRLQDAR) form the LRRCT domain. The helical transmembrane segment at 588-608 (AAVVSAACCALFLFLLLTGVL) threads the bilayer. Residues 609 to 784 (CHRFHGLWYM…WLNLRAAIRS (176 aa)) lie on the Cytoplasmic side of the membrane. The TIR domain occupies 639–782 (ICYDAFVSYS…GFWLNLRAAI (144 aa)). A Glycyl lysine isopeptide (Lys-Gly) (interchain with G-Cter in ubiquitin) cross-link involves residue K754. The ATG16L1-binding motif signature appears at 761–778 (YLEWPLDETQQEGFWLNL).

The protein belongs to the Toll-like receptor family. As to quaternary structure, interacts with LY96, TLR1 and TLR6 (via extracellular domain). TLR2 seems to exist in heterodimers with either TLR1 or TLR6 before stimulation by the ligand. The heterodimers form bigger oligomers in response to their corresponding ligands as well as further heterotypic associations with other receptors such as CD14 and/or CD36. Binds MYD88 (via TIR domain). Interacts with TICAM1. Interacts with CNPY3. Interacts with ATG16L1. Interacts with PPP1R11. Interacts with TICAM2. Interacts with TIRAP. Ubiquitinated at Lys-754 by PPP1R11, leading to its degradation. Deubiquitinated by USP2. Post-translationally, glycosylation of Asn-442 is critical for secretion of the N-terminal ectodomain of TLR2.

It localises to the membrane. Its subcellular location is the cytoplasmic vesicle. It is found in the phagosome membrane. The protein resides in the membrane raft. Functionally, cooperates with LY96 to mediate the innate immune response to bacterial lipoproteins and other microbial cell wall components. Cooperates with TLR1 or TLR6 to mediate the innate immune response to bacterial lipoproteins or lipopeptides. Acts via MYD88 and TRAF6, leading to NF-kappa-B activation, cytokine secretion and the inflammatory response. May also promote apoptosis in response to lipoproteins. Forms activation clusters composed of several receptors depending on the ligand, these clusters trigger signaling from the cell surface and subsequently are targeted to the Golgi in a lipid-raft dependent pathway. Forms the cluster TLR2:TLR6:CD14:CD36 in response to diacylated lipopeptides and TLR2:TLR1:CD14 in response to triacylated lipopeptides. This Boselaphus tragocamelus (Nilgai) protein is Toll-like receptor 2 (TLR2).